The primary structure comprises 397 residues: Succinate--CoA ligase [ADP-forming] subunit beta (397 aa).

The ATP-grasp domain occupies 9 to 254 (KALLKSFGAP…TTEEDEKEIE (246 aa)). ATP-binding positions include lysine 46, 53–55 (GRG), glutamate 109, alanine 112, and glutamate 117. Residues asparagine 209 and aspartate 223 each coordinate Mg(2+). Substrate is bound by residues asparagine 274 and 331 to 333 (GIM).

The protein belongs to the succinate/malate CoA ligase beta subunit family. As to quaternary structure, heterotetramer of two alpha and two beta subunits. It depends on Mg(2+) as a cofactor.

The enzyme catalyses succinate + ATP + CoA = succinyl-CoA + ADP + phosphate. It catalyses the reaction GTP + succinate + CoA = succinyl-CoA + GDP + phosphate. It functions in the pathway carbohydrate metabolism; tricarboxylic acid cycle; succinate from succinyl-CoA (ligase route): step 1/1. Succinyl-CoA synthetase functions in the citric acid cycle (TCA), coupling the hydrolysis of succinyl-CoA to the synthesis of either ATP or GTP and thus represents the only step of substrate-level phosphorylation in the TCA. The beta subunit provides nucleotide specificity of the enzyme and binds the substrate succinate, while the binding sites for coenzyme A and phosphate are found in the alpha subunit. The chain is Succinate--CoA ligase [ADP-forming] subunit beta from Mesorhizobium japonicum (strain LMG 29417 / CECT 9101 / MAFF 303099) (Mesorhizobium loti (strain MAFF 303099)).